A 394-amino-acid polypeptide reads, in one-letter code: Elongation factor Tu (394 aa).

The region spanning 10-204 is the tr-type G domain; that stretch reads KPHVNVGTIG…ALDSYIPTPE (195 aa). A G1 region spans residues 19-26; the sequence is GHVDHGKT. A GTP-binding site is contributed by 19-26; that stretch reads GHVDHGKT. T26 provides a ligand contact to Mg(2+). Residues 60–64 are G2; the sequence is GITIN. The segment at 81 to 84 is G3; sequence DCPG. Residues 81 to 85 and 136 to 139 contribute to the GTP site; these read DCPGH and NKCD. The segment at 136-139 is G4; sequence NKCD. The tract at residues 174–176 is G5; sequence SAL.

Belongs to the TRAFAC class translation factor GTPase superfamily. Classic translation factor GTPase family. EF-Tu/EF-1A subfamily. In terms of assembly, monomer.

It is found in the cytoplasm. It carries out the reaction GTP + H2O = GDP + phosphate + H(+). In terms of biological role, GTP hydrolase that promotes the GTP-dependent binding of aminoacyl-tRNA to the A-site of ribosomes during protein biosynthesis. This is Elongation factor Tu from Neisseria meningitidis serogroup A / serotype 4A (strain DSM 15465 / Z2491).